A 287-amino-acid polypeptide reads, in one-letter code: 4-hydroxybenzoate octaprenyltransferase (287 aa).

Helical transmembrane passes span 23–40, 98–118, 141–161, 163–183, 213–233, and 235–255; these read IGSLLLLWPTLWALWLAG, ILFVVLVLLAFGLVLTLNKMT, LPQFVLGAAFGWSIPMAYAAV, ESLPATCWMMFLAYICWTVAY, IIIGLLQFSMLALLLALGNIT, and LGIPYTISLLVAAGMFIYQQI.

Belongs to the UbiA prenyltransferase family. The cofactor is Mg(2+).

It is found in the cell inner membrane. It carries out the reaction all-trans-octaprenyl diphosphate + 4-hydroxybenzoate = 4-hydroxy-3-(all-trans-octaprenyl)benzoate + diphosphate. Its pathway is cofactor biosynthesis; ubiquinone biosynthesis. Its function is as follows. Catalyzes the prenylation of para-hydroxybenzoate (PHB) with an all-trans polyprenyl group. Mediates the second step in the final reaction sequence of ubiquinone-8 (UQ-8) biosynthesis, which is the condensation of the polyisoprenoid side chain with PHB, generating the first membrane-bound Q intermediate 3-octaprenyl-4-hydroxybenzoate. This chain is 4-hydroxybenzoate octaprenyltransferase, found in Pectobacterium atrosepticum (strain SCRI 1043 / ATCC BAA-672) (Erwinia carotovora subsp. atroseptica).